The following is a 202-amino-acid chain: Segregation and condensation protein B (202 aa).

Belongs to the ScpB family. In terms of assembly, homodimer. Homodimerization may be required to stabilize the binding of ScpA to the Smc head domains. Component of a cohesin-like complex composed of ScpA, ScpB and the Smc homodimer, in which ScpA and ScpB bind to the head domain of Smc. The presence of the three proteins is required for the association of the complex with DNA.

It localises to the cytoplasm. Functionally, participates in chromosomal partition during cell division. May act via the formation of a condensin-like complex containing Smc and ScpA that pull DNA away from mid-cell into both cell halves. This Clostridium acetobutylicum (strain ATCC 824 / DSM 792 / JCM 1419 / IAM 19013 / LMG 5710 / NBRC 13948 / NRRL B-527 / VKM B-1787 / 2291 / W) protein is Segregation and condensation protein B.